A 272-amino-acid chain; its full sequence is GPN-loop GTPase 3 (272 aa).

A GTP-binding site is contributed by 13–18 (GAGKST). The Gly-Pro-Asn (GPN)-loop; involved in dimer interface motif lies at 70 to 72 (GPN). 173-176 (SKLD) contacts GTP.

Belongs to the GPN-loop GTPase family. In terms of assembly, heterodimers with NPA3/GPN1 or GPN2. Binds to RNA polymerase II (RNAPII).

Functionally, small GTPase required for proper nuclear localization of RNA polymerase II and III (RNAPII and RNAPIII). May act at an RNAP assembly step prior to nuclear import. Promotes sister chromatid separation during anaphase. This Saccharomyces cerevisiae (strain ATCC 204508 / S288c) (Baker's yeast) protein is GPN-loop GTPase 3.